Here is a 395-residue protein sequence, read N- to C-terminus: Levanbiose-producing levanase (395 aa).

Aspartate 1 is an active-site residue. Substrate-binding positions include tryptophan 59–threonine 60, arginine 124–aspartate 125, glutamate 173, and tryptophan 261.

It belongs to the glycosyl hydrolase 32 family.

It localises to the membrane. It catalyses the reaction Hydrolysis of (2-&gt;6)-beta-D-fructofuranan, to remove successive disaccharide residues as levanbiose, i.e. 6-(beta-D-fructofuranosyl)-D-fructose, from the end of the chain.. In terms of biological role, catalyzes the degradation of levan mainly into levanbiose (difructose). Can also hydrolyze inulin. This Geobacillus stearothermophilus (Bacillus stearothermophilus) protein is Levanbiose-producing levanase (levB).